The chain runs to 156 residues: Endoribonuclease YbeY (156 aa).

Zn(2+)-binding residues include histidine 122, histidine 126, and histidine 132.

The protein belongs to the endoribonuclease YbeY family. It depends on Zn(2+) as a cofactor.

Its subcellular location is the cytoplasm. In terms of biological role, single strand-specific metallo-endoribonuclease involved in late-stage 70S ribosome quality control and in maturation of the 3' terminus of the 16S rRNA. This Bacillus cereus (strain ZK / E33L) protein is Endoribonuclease YbeY.